A 166-amino-acid chain; its full sequence is Small ribosomal subunit protein uS5 (166 aa).

In terms of domain architecture, S5 DRBM spans 11 to 74 (LIEKLITVNR…EKARRNMVTV (64 aa)).

This sequence belongs to the universal ribosomal protein uS5 family. In terms of assembly, part of the 30S ribosomal subunit. Contacts proteins S4 and S8.

Its function is as follows. With S4 and S12 plays an important role in translational accuracy. Functionally, located at the back of the 30S subunit body where it stabilizes the conformation of the head with respect to the body. This Idiomarina loihiensis (strain ATCC BAA-735 / DSM 15497 / L2-TR) protein is Small ribosomal subunit protein uS5.